Consider the following 187-residue polypeptide: UPF0200 protein MA_4660 (187 aa).

9-16 contributes to the ATP binding site; that stretch reads GMPASGKS.

It belongs to the UPF0200 family.

This Methanosarcina acetivorans (strain ATCC 35395 / DSM 2834 / JCM 12185 / C2A) protein is UPF0200 protein MA_4660.